The sequence spans 231 residues: Ribose-5-phosphate isomerase A (231 aa).

Residues 32–35 (TGST), 85–88 (DGAD), and 98–101 (KGGG) contribute to the substrate site. Catalysis depends on Glu-107, which acts as the Proton acceptor. Lys-125 lines the substrate pocket.

Belongs to the ribose 5-phosphate isomerase family. In terms of assembly, homodimer.

The catalysed reaction is aldehydo-D-ribose 5-phosphate = D-ribulose 5-phosphate. It functions in the pathway carbohydrate degradation; pentose phosphate pathway; D-ribose 5-phosphate from D-ribulose 5-phosphate (non-oxidative stage): step 1/1. Functionally, catalyzes the reversible conversion of ribose-5-phosphate to ribulose 5-phosphate. This Burkholderia mallei (strain NCTC 10247) protein is Ribose-5-phosphate isomerase A.